The primary structure comprises 270 residues: Formamidopyrimidine-DNA glycosylase (270 aa).

The active-site Schiff-base intermediate with DNA is the P2. E3 serves as the catalytic Proton donor. K58 (proton donor; for beta-elimination activity) is an active-site residue. H90, R109, and R152 together coordinate DNA. The segment at 237-270 (RVYGREGEPCQCGGVVKRIVQGGRSTFFCPRCQK) adopts an FPG-type zinc-finger fold. R260 (proton donor; for delta-elimination activity) is an active-site residue.

The protein belongs to the FPG family. Monomer. It depends on Zn(2+) as a cofactor.

It carries out the reaction Hydrolysis of DNA containing ring-opened 7-methylguanine residues, releasing 2,6-diamino-4-hydroxy-5-(N-methyl)formamidopyrimidine.. It catalyses the reaction 2'-deoxyribonucleotide-(2'-deoxyribose 5'-phosphate)-2'-deoxyribonucleotide-DNA = a 3'-end 2'-deoxyribonucleotide-(2,3-dehydro-2,3-deoxyribose 5'-phosphate)-DNA + a 5'-end 5'-phospho-2'-deoxyribonucleoside-DNA + H(+). Involved in base excision repair of DNA damaged by oxidation or by mutagenic agents. Acts as a DNA glycosylase that recognizes and removes damaged bases. Has a preference for oxidized purines, such as 7,8-dihydro-8-oxoguanine (8-oxoG). Has AP (apurinic/apyrimidinic) lyase activity and introduces nicks in the DNA strand. Cleaves the DNA backbone by beta-delta elimination to generate a single-strand break at the site of the removed base with both 3'- and 5'-phosphates. This chain is Formamidopyrimidine-DNA glycosylase, found in Novosphingobium aromaticivorans (strain ATCC 700278 / DSM 12444 / CCUG 56034 / CIP 105152 / NBRC 16084 / F199).